A 93-amino-acid chain; its full sequence is 3-isopropylmalate dehydratase small subunit (93 aa).

It belongs to the LeuD family. LeuD type 1 subfamily. Heterodimer of LeuC and LeuD.

The catalysed reaction is (2R,3S)-3-isopropylmalate = (2S)-2-isopropylmalate. It functions in the pathway amino-acid biosynthesis; L-leucine biosynthesis; L-leucine from 3-methyl-2-oxobutanoate: step 2/4. Functionally, catalyzes the isomerization between 2-isopropylmalate and 3-isopropylmalate, via the formation of 2-isopropylmaleate. The polypeptide is 3-isopropylmalate dehydratase small subunit (leuD) (Actinoplanes teichomyceticus).